The primary structure comprises 255 residues: Hydroxyacylglutathione hydrolase (255 aa).

Residues histidine 56, histidine 58, aspartate 60, histidine 61, histidine 114, aspartate 133, and histidine 171 each coordinate Zn(2+).

Belongs to the metallo-beta-lactamase superfamily. Glyoxalase II family. In terms of assembly, monomer. Zn(2+) is required as a cofactor.

It catalyses the reaction an S-(2-hydroxyacyl)glutathione + H2O = a 2-hydroxy carboxylate + glutathione + H(+). It participates in secondary metabolite metabolism; methylglyoxal degradation; (R)-lactate from methylglyoxal: step 2/2. Thiolesterase that catalyzes the hydrolysis of S-D-lactoyl-glutathione to form glutathione and D-lactic acid. The polypeptide is Hydroxyacylglutathione hydrolase (Chelativorans sp. (strain BNC1)).